The following is a 664-amino-acid chain: Phosphomethylpyrimidine synthase (664 aa).

Substrate-binding positions include Asn-235, Met-264, Tyr-293, His-329, 349–351 (SRG), 390–393 (DGMR), and Glu-429. His-433 is a binding site for Zn(2+). Position 456 (Tyr-456) interacts with substrate. His-497 serves as a coordination point for Zn(2+). Positions 577, 580, and 585 each coordinate [4Fe-4S] cluster.

This sequence belongs to the ThiC family. Homodimer. The cofactor is [4Fe-4S] cluster.

It carries out the reaction 5-amino-1-(5-phospho-beta-D-ribosyl)imidazole + S-adenosyl-L-methionine = 4-amino-2-methyl-5-(phosphooxymethyl)pyrimidine + CO + 5'-deoxyadenosine + formate + L-methionine + 3 H(+). It participates in cofactor biosynthesis; thiamine diphosphate biosynthesis. Its function is as follows. Catalyzes the synthesis of the hydroxymethylpyrimidine phosphate (HMP-P) moiety of thiamine from aminoimidazole ribotide (AIR) in a radical S-adenosyl-L-methionine (SAM)-dependent reaction. The protein is Phosphomethylpyrimidine synthase of Shewanella amazonensis (strain ATCC BAA-1098 / SB2B).